The sequence spans 414 residues: MAISYNHSMSACQKIKTDQAMVRDRLKQSQSLIGLSHDEMVQALRSIGVPEHQTRMRVRQLWHWFYVRGVSSFDEMFNISKPMREMLKDNFSIAYPEIVEEQISKDGTYKWLLRFPARGAGKPVEIETVYIPGEGRGTLCVSSQVGCTLTCSFCYTGTQKLVRNLTAEEILLQLLFARNRLGDFPGKDKPDHSSLSEERRKITNIVMMGMGEPLYNFEAVKKALLIASDGDGLSLSKRRITLSTSGVVPEIIRAGEEIGVMLAVSLHAVCDSLRDVLVPINKKYPLSMLMEACRNYPGLSNAKRITFEYVMLKDVNDSLDDAKKLIKLLKGIPAKINLIPFNPWPGSHYECSDWEQIERFADVINRAGYASPIRMPRGRDILAACGNLKSTSERLRKSERLQLESMMGDDLSSI.

The Proton acceptor role is filled by E127. In terms of domain architecture, Radical SAM core spans 133 to 380 (GEGRGTLCVS…SPIRMPRGRD (248 aa)). Cysteines 140 and 385 form a disulfide. [4Fe-4S] cluster-binding residues include C147, C151, and C154. S-adenosyl-L-methionine-binding positions include 211-212 (GE), S243, 265-267 (SLH), and N342. C385 (S-methylcysteine intermediate) is an active-site residue.

The protein belongs to the radical SAM superfamily. RlmN family. [4Fe-4S] cluster is required as a cofactor.

The protein localises to the cytoplasm. The enzyme catalyses adenosine(2503) in 23S rRNA + 2 reduced [2Fe-2S]-[ferredoxin] + 2 S-adenosyl-L-methionine = 2-methyladenosine(2503) in 23S rRNA + 5'-deoxyadenosine + L-methionine + 2 oxidized [2Fe-2S]-[ferredoxin] + S-adenosyl-L-homocysteine. It catalyses the reaction adenosine(37) in tRNA + 2 reduced [2Fe-2S]-[ferredoxin] + 2 S-adenosyl-L-methionine = 2-methyladenosine(37) in tRNA + 5'-deoxyadenosine + L-methionine + 2 oxidized [2Fe-2S]-[ferredoxin] + S-adenosyl-L-homocysteine. In terms of biological role, specifically methylates position 2 of adenine 2503 in 23S rRNA and position 2 of adenine 37 in tRNAs. m2A2503 modification seems to play a crucial role in the proofreading step occurring at the peptidyl transferase center and thus would serve to optimize ribosomal fidelity. The polypeptide is Dual-specificity RNA methyltransferase RlmN (Bartonella bacilliformis (strain ATCC 35685 / KC583 / Herrer 020/F12,63)).